A 32-amino-acid chain; its full sequence is PGATLQXAXXLLVAVXAXPPPPLGVXPKPXPG.

Belongs to the glycosyltransferase 7 family. Requires Mn(2+) as cofactor. Post-translationally, the soluble form derives from the membrane form by proteolytic processing.

The protein resides in the golgi apparatus. Its subcellular location is the golgi stack membrane. The protein localises to the secreted. It localises to the cell membrane. It is found in the cell projection. The protein resides in the filopodium. The enzyme catalyses D-glucose + UDP-alpha-D-galactose = lactose + UDP + H(+). The catalysed reaction is an N-acetyl-beta-D-glucosaminyl derivative + UDP-alpha-D-galactose = a beta-D-galactosyl-(1-&gt;4)-N-acetyl-beta-D-glucosaminyl derivative + UDP + H(+). It catalyses the reaction N-acetyl-D-glucosamine + UDP-alpha-D-galactose = beta-D-galactosyl-(1-&gt;4)-N-acetyl-D-glucosamine + UDP + H(+). It carries out the reaction a beta-D-GlcNAc-(1-&gt;3)-beta-D-Gal-(1-&gt;4)-beta-D-Glc-(1&lt;-&gt;1)-Cer(d18:1(4E)) + UDP-alpha-D-galactose = a neolactoside nLc4Cer(d18:1(4E)) + UDP + H(+). The enzyme catalyses a beta-D-glucosylceramide + UDP-alpha-D-galactose = a beta-D-galactosyl-(1-&gt;4)-beta-D-glucosyl-(1&lt;-&gt;1)-ceramide + UDP + H(+). The catalysed reaction is a neolactoside IV(3)-beta-GlcNAc-nLc4Cer + UDP-alpha-D-galactose = a neolactoside nLc6Cer + UDP + H(+). It functions in the pathway protein modification; protein glycosylation. Functionally, this protein is responsible for the synthesis of complex-type N-linked oligosaccharides in many glycoproteins as well as the carbohydrate moieties of glycolipids. The protein is Beta-1,4-galactosyltransferase 1 of Rattus norvegicus (Rat).